A 161-amino-acid polypeptide reads, in one-letter code: Globin CTT-VIIB-6 (161 aa).

The first 16 residues, 1–16 (MKFFAVLALCIVGAIA), serve as a signal peptide directing secretion. Residues 18 to 161 (PLTADEASLV…NTFAIVVPRL (144 aa)) enclose the Globin domain. Heme b contacts are provided by His-76 and His-111.

This sequence belongs to the globin family. Homodimer.

The chain is Globin CTT-VIIB-6 (CTT-7B6) from Chironomus thummi thummi (Midge).